Reading from the N-terminus, the 144-residue chain is DNA-directed RNA polymerases II and V subunit 6B (144 aa).

The segment covering 1–32 has biased composition (acidic residues); that stretch reads MADDDYNEVDDLGYEDEPAEPEIEEGVEEDAD. Residues 1 to 62 are disordered; the sequence is MADDDYNEVD…EPVQRPRKTS (62 aa). Positions 46 to 56 are enriched in basic and acidic residues; sequence TEDKVETEPVQ.

The protein belongs to the archaeal Rpo6/eukaryotic RPB6 RNA polymerase subunit family. As to quaternary structure, component of the RNA polymerase II and V complexes.

The protein localises to the nucleus. In terms of biological role, DNA-dependent RNA polymerase catalyzes the transcription of DNA into RNA using the four ribonucleoside triphosphates as substrates. Component of RNA polymerase II which synthesizes mRNA precursors and many functional non-coding RNAs. Pol II is the central component of the basal RNA polymerase II transcription machinery. It is composed of mobile elements that move relative to each other. Component of RNA polymerase V which mediates RNA-directed DNA methylation-dependent (RdDM) transcriptional gene silencing (TGS) of endogenous repeated sequences, including transposable elements. In Arabidopsis thaliana (Mouse-ear cress), this protein is DNA-directed RNA polymerases II and V subunit 6B (NRPB6B).